We begin with the raw amino-acid sequence, 346 residues long: Phenylalanine--tRNA ligase alpha subunit (346 aa).

Glu-261 contributes to the Mg(2+) binding site.

This sequence belongs to the class-II aminoacyl-tRNA synthetase family. Phe-tRNA synthetase alpha subunit type 1 subfamily. Tetramer of two alpha and two beta subunits. It depends on Mg(2+) as a cofactor.

Its subcellular location is the cytoplasm. The enzyme catalyses tRNA(Phe) + L-phenylalanine + ATP = L-phenylalanyl-tRNA(Phe) + AMP + diphosphate + H(+). In Dehalococcoides mccartyi (strain ATCC BAA-2100 / JCM 16839 / KCTC 5957 / BAV1), this protein is Phenylalanine--tRNA ligase alpha subunit.